The chain runs to 352 residues: Uroporphyrinogen decarboxylase (352 aa).

Substrate-binding positions include 27–31, Asp77, Tyr154, Thr209, and His325; that span reads RQAGR.

This sequence belongs to the uroporphyrinogen decarboxylase family. Homodimer.

Its subcellular location is the cytoplasm. It carries out the reaction uroporphyrinogen III + 4 H(+) = coproporphyrinogen III + 4 CO2. The protein operates within porphyrin-containing compound metabolism; protoporphyrin-IX biosynthesis; coproporphyrinogen-III from 5-aminolevulinate: step 4/4. In terms of biological role, catalyzes the decarboxylation of four acetate groups of uroporphyrinogen-III to yield coproporphyrinogen-III. This chain is Uroporphyrinogen decarboxylase, found in Legionella pneumophila (strain Corby).